Reading from the N-terminus, the 373-residue chain is Dimethylallyltryptophan synthase CymD (373 aa).

Residues aspartate 55, valine 56, and glutamate 64 each coordinate L-tryptophan. The Nucleophile role is filled by glutamate 64. Residues glutamine 77, lysine 146, tryptophan 148, arginine 205, and lysine 207 each coordinate dimethylallyl diphosphate. Arginine 211 contributes to the L-tryptophan binding site. Residue tyrosine 274 participates in dimethylallyl diphosphate binding. An L-tryptophan-binding site is contributed by tyrosine 326. Dimethylallyl diphosphate contacts are provided by arginine 337, lysine 339, and tyrosine 341. The region spanning 346–373 is the FtsK domain; the sequence is MHDVTPPPLGVSQQHHLSGQTTARGRTE.

In terms of biological role, dimethylallyltryptophan synthase; part of the gene cluster that mediates the biosynthesis of cyclic heptapeptides, known as cyclomarins and also of cyclic dipeptides, called cyclomarazines, which have both antimicrobial and cytotoxic effects. Catalyzes the reverse N-prenylation of monomeric L-tryptophan with dimethylallyl diphosphate (DMAPP) to form N-(1,1-dimethylallyl)-tryptophan (r-N-DMAT). The formation of r-N-DMAT appears to proceed via the deprotonation of the indole nitrogen of tryptophan, which facilitates a nucleophilic attack on the carbocation that is forming on the dimethylallyl group as the diphosphate dissociates. The N-(1,1-dimethylallyl)-tryptophan produced by CymD is combined with a range of standard and nonproteinogenic amino acid substrates to synthesize the peptides, a process that is probably catalyzed by the non-canonical nonribosomal peptide synthetase (NRPS), CymA. Other proteins in the cluster catalyze further modifications of the peptides including CymV which catalyzes the oxidation of olefinic cyclomarins and cyclomarazines to their respective epoxide derivatives. Utilizes only DMAPP as the prenyl donor and has no requirement for divalent cations. In Salinispora arenicola (strain CNS-205), this protein is Dimethylallyltryptophan synthase CymD.